A 300-amino-acid polypeptide reads, in one-letter code: Cysteine-rich venom protein (300 aa).

Residues 1–21 (MLSTMQTVGAVLMLSIVLVAG) form the signal peptide. Positions 22-24 (RKR) are excised as a propeptide. The 122-residue stretch at 62–183 (LEMHNKIRAD…GNNKYFVCNY (122 aa)) folds into the SCP domain.

In terms of processing, contains 11 disulfide bonds. As to expression, expressed by the venom duct.

Its subcellular location is the secreted. Functionally, protease responsible for cleaving the conotoxins from their propeptide precursors. The target propeptide requires minimum four residues including a leucine N-terminal of the cleavage site for efficient substrate processing (example: Xaa-Xaa-Xaa-Leu-Asn-Lys-Arg-toxin). This chain is Cysteine-rich venom protein, found in Conus textile (Cloth-of-gold cone).